The sequence spans 302 residues: Acetylglutamate kinase (302 aa).

Residues 68–69, Arg-90, and Asn-194 contribute to the substrate site; that span reads GG.

It belongs to the acetylglutamate kinase family. ArgB subfamily.

Its subcellular location is the cytoplasm. It catalyses the reaction N-acetyl-L-glutamate + ATP = N-acetyl-L-glutamyl 5-phosphate + ADP. Its pathway is amino-acid biosynthesis; L-arginine biosynthesis; N(2)-acetyl-L-ornithine from L-glutamate: step 2/4. Functionally, catalyzes the ATP-dependent phosphorylation of N-acetyl-L-glutamate. In Acinetobacter baumannii (strain AB307-0294), this protein is Acetylglutamate kinase.